We begin with the raw amino-acid sequence, 646 residues long: Esterase EstA (646 aa).

An N-terminal signal peptide occupies residues 1-24 (MIRMALKPLVAACLLASLSTAPQA). Residues 25–397 (APSPYSTLVV…DSAASGDGNG (373 aa)) are Extracellular-facing. Residue Ser-38 is the Nucleophile of the active site. Catalysis depends on residues Asp-310 and His-313. One can recognise an Autotransporter domain in the interval 366 to 646 (QNVGQWRGFV…SVSLALSLDF (281 aa)). A beta stranded transmembrane segment spans residues 398 to 408 (YNLTLGGSYRI). The Periplasmic portion of the chain corresponds to 409–410 (DE). Residues 411 to 421 (AWRAGVAAGFY) form a beta stranded membrane-spanning segment. Residues 422 to 437 (RQKLEAGAKDSDYRMN) are Extracellular-facing. The chain crosses the membrane as a beta stranded span at residues 438–447 (SYMASAFVQY). Residues 448 to 451 (QENR) lie on the Periplasmic side of the membrane. The chain crosses the membrane as a beta stranded span at residues 452–461 (WWADAALTGG). Residues 462–488 (YLDYDDLKRKFALGGGERSEKGDTNGH) lie on the Extracellular side of the membrane. The chain crosses the membrane as a beta stranded span at residues 489–500 (LWAFSARLGYDI). The Periplasmic portion of the chain corresponds to 501–507 (AQQADSP). The beta stranded transmembrane segment at 508-518 (WHLSPFVSADY) threads the bilayer. Over 519–547 (ARVEVDGYSEKGASATALDYDDQKRSSKR) the chain is Extracellular. Residues 548–558 (LGAGLQGKYAF) form a beta stranded membrane-spanning segment. Residues 559-561 (GSD) lie on the Periplasmic side of the membrane. A beta stranded membrane pass occupies residues 562–571 (TQLFAEYAHE). The Extracellular portion of the chain corresponds to 572–605 (REYEDDTQDLTMSLNSLPGNRFTLEGYTPQDHLN). The chain crosses the membrane as a beta stranded span at residues 606-615 (RVSLGFSQKL). Over 616–618 (APE) the chain is Periplasmic. The beta stranded transmembrane segment at 619 to 628 (LSLRGGYNWR) threads the bilayer. At 629 to 636 (KGEDDTQQ) the chain is on the extracellular side. Residues 637–646 (SVSLALSLDF) traverse the membrane as a beta stranded segment.

Belongs to the 'GDSL' lipolytic enzyme family.

The protein localises to the cell outer membrane. It catalyses the reaction a carboxylic ester + H2O = an alcohol + a carboxylate + H(+). In terms of biological role, esterase whose enzymatic activity is required for rhamnolipid production, all kinds of cell motility (swimming, swarming, and twitching), and biofilm formation; the exact role of EstA in these processes is unclear. In vitro, has pronounced esterase activities towards p-nitrophenyl esters of short acyl chain length (C4-C6) and Tween detergents. Also shows relatively high activity towards beta-naphthyl butyrate, whereas its activities towards triacylglycerols and acyls-CoA are negligible. The polypeptide is Esterase EstA (estA) (Pseudomonas aeruginosa (strain ATCC 15692 / DSM 22644 / CIP 104116 / JCM 14847 / LMG 12228 / 1C / PRS 101 / PAO1)).